A 662-amino-acid polypeptide reads, in one-letter code: Protein Aster-C (662 aa).

Residues 1 to 34 (MEGAPTVRQVMNEGDSSLATDLQEDVEENPSPTV) form a disordered region. Residues 69–136 (EEYRRQFTHL…KNITFMTKEK (68 aa)) form the GRAM domain. 2 disordered regions span residues 212-237 (SIED…EKLS) and 249-284 (RVSE…LPTL). Residues 265-276 (LGKEESQNEKQT) show a composition bias toward basic and acidic residues. A VASt domain is found at 326 to 497 (HGRLFINRIF…DLLIEESVLN (172 aa)). The chain crosses the membrane as a helical span at residues 557–577 (LIVVMSIFVLLLVLLNVTLFL).

It is found in the endoplasmic reticulum membrane. It localises to the cell membrane. Its function is as follows. Cholesterol transporter that mediates non-vesicular transport of cholesterol from the plasma membrane (PM) to the endoplasmic reticulum (ER). Contains unique domains for binding cholesterol and the PM, thereby serving as a molecular bridge for the transfer of cholesterol from the PM to the ER. Plays a crucial role in cholesterol homeostasis and has the unique ability to localize to the PM based on the level of membrane cholesterol. In lipid-poor conditions localizes to the ER membrane and in response to excess cholesterol in the PM is recruited to the endoplasmic reticulum-plasma membrane contact sites (EPCS) which is mediated by the GRAM domain. At the EPCS, the sterol-binding VASt/ASTER domain binds to the cholesterol in the PM and facilitates its transfer from the PM to ER. In Homo sapiens (Human), this protein is Protein Aster-C (GRAMD1C).